Here is a 362-residue protein sequence, read N- to C-terminus: Large ribosomal subunit protein uL3 (362 aa).

Positions 340 to 362 (RPPKKKPPVQRPQITYVSVESKQ) are disordered. Residues 351–362 (PQITYVSVESKQ) are compositionally biased toward polar residues.

Belongs to the universal ribosomal protein uL3 family. Part of the 50S ribosomal subunit. Forms a cluster with proteins L14 and L24e.

In terms of biological role, one of the primary rRNA binding proteins, it binds directly near the 3'-end of the 23S rRNA, where it nucleates assembly of the 50S subunit. This is Large ribosomal subunit protein uL3 from Pyrococcus horikoshii (strain ATCC 700860 / DSM 12428 / JCM 9974 / NBRC 100139 / OT-3).